Here is a 275-residue protein sequence, read N- to C-terminus: Adaptin ear-binding coat-associated protein 1 (275 aa).

Residues 170–191 (KGGASKPRTARGGGLSLLPPPP) form a disordered region. Arg180 is modified (omega-N-methylarginine). Thr211 is subject to Phosphothreonine. Short sequence motifs (WXXF motif) lie at residues 252-255 (WGDF) and 272-275 (WVQF). Positions 254 to 275 (DFSTASSSVPNQAPQPSNWVQF) are disordered. The segment covering 256 to 275 (STASSSVPNQAPQPSNWVQF) has biased composition (polar residues).

This sequence belongs to the NECAP family. As to quaternary structure, interacts with AP1G1 and AP2A1 components of the adapter protein complexes AP-1 and AP-2. Interacts with the GAE domain proteins GGA1, GGA2 and GGA3.

The protein resides in the cytoplasmic vesicle. The protein localises to the clathrin-coated vesicle membrane. Its subcellular location is the cell membrane. In terms of biological role, involved in endocytosis. The sequence is that of Adaptin ear-binding coat-associated protein 1 (NECAP1) from Homo sapiens (Human).